Consider the following 592-residue polypeptide: Hepatocyte nuclear factor 1-alpha-B (592 aa).

A dimerization region spans residues 1-31 (MASQLSYLQQELLRALLESGVTKEALKKALA). One can recognise an HNF-p1 domain in the interval 1–32 (MASQLSYLQQELLRALLESGVTKEALKKALAD). The disordered stretch occupies residues 54–78 (NCVQLPNGLGEPQMSEDESSDDGGD). A compositionally biased stretch (acidic residues) spans 67-77 (MSEDESSDDGG). The region spanning 85 to 180 (KELERLSPEE…IARQFTHAGH (96 aa)) is the POU-specific atypical domain. 6 interaction with DNA regions span residues 128–130 (QRE), 141–147 (HLSQHLN), 153–156 (KTQK), 201–204 (RFKW), 261–263 (RVY), and 268–271 (NSGK). The Nuclear localization signal motif lies at 195–203 (KKMRRNRFK). The segment at residues 197-277 (MRRNRFKWGP…NSGKEEAFRH (81 aa)) is a DNA-binding region (homeobox; HNF1-type). Polar residues-rich tracts occupy residues 284–295 (YNGQQSSAQPLS) and 306–328 (RYTQ…TLSP). Disordered stretches follow at residues 284–329 (YNGQ…LSPS) and 511–533 (KQVV…HNQD).

Belongs to the HNF1 homeobox family. As to quaternary structure, binds DNA as dimer. Forms a homodimer or heterodimer with HNF1-alpha-A. Potentially also form a heterodimer with HNF1-beta. In terms of tissue distribution, liver.

The protein localises to the nucleus. Functionally, transcriptional activator that regulates the tissue specific expression of multiple genes, especially in pancreas and liver. Binds to the hepatocyte specific promoter element HP1. Binds to the inverted palindrome 5'-GTTAATNATTAAC-3'. The sequence is that of Hepatocyte nuclear factor 1-alpha-B (hnf1a-b) from Xenopus laevis (African clawed frog).